The chain runs to 317 residues: Glutathione synthetase (317 aa).

Residues 125–311 (EKMFATLFPQ…IGGKLMDAID (187 aa)) enclose the ATP-grasp domain. 152-208 (TAKHADVILKPLDGMGGTSIFRHRAGDPNLSVILETLTALGTQQIMAQAYLPAIKDG) serves as a coordination point for ATP. The Mg(2+) site is built by glutamate 282 and asparagine 284.

This sequence belongs to the prokaryotic GSH synthase family. Mg(2+) serves as cofactor. It depends on Mn(2+) as a cofactor.

It carries out the reaction gamma-L-glutamyl-L-cysteine + glycine + ATP = glutathione + ADP + phosphate + H(+). It functions in the pathway sulfur metabolism; glutathione biosynthesis; glutathione from L-cysteine and L-glutamate: step 2/2. This is Glutathione synthetase from Pseudomonas putida (strain ATCC 47054 / DSM 6125 / CFBP 8728 / NCIMB 11950 / KT2440).